The following is a 496-amino-acid chain: Lysine--tRNA ligase (496 aa).

Mg(2+)-binding residues include Glu-409 and Glu-416.

The protein belongs to the class-II aminoacyl-tRNA synthetase family. As to quaternary structure, homodimer. It depends on Mg(2+) as a cofactor.

It is found in the cytoplasm. It carries out the reaction tRNA(Lys) + L-lysine + ATP = L-lysyl-tRNA(Lys) + AMP + diphosphate. The chain is Lysine--tRNA ligase from Streptococcus pneumoniae serotype 4 (strain ATCC BAA-334 / TIGR4).